Here is a 371-residue protein sequence, read N- to C-terminus: ATP-dependent protease ATP-binding subunit-like protein AmiB (371 aa).

Residue 96-103 (GPTGVGKT) participates in ATP binding.

The protein belongs to the ClpX chaperone family. Requires Mg(2+) as cofactor.

In terms of biological role, unlikely to encode a regulatory protein. Has ATPase activity. AmiB and AmiS may act jointly into a two component ABC transporter system. This is ATP-dependent protease ATP-binding subunit-like protein AmiB (amiB) from Pseudomonas aeruginosa (strain ATCC 15692 / DSM 22644 / CIP 104116 / JCM 14847 / LMG 12228 / 1C / PRS 101 / PAO1).